A 471-amino-acid polypeptide reads, in one-letter code: Glutamate--tRNA ligase (471 aa).

The 'HIGH' region signature appears at proline 10–glycine 20. Residues glycine 117 to aspartate 137 form a disordered region. The 'KMSKS' region signature appears at lysine 239 to arginine 243. ATP is bound at residue lysine 242.

This sequence belongs to the class-I aminoacyl-tRNA synthetase family. Glutamate--tRNA ligase type 1 subfamily. Monomer.

Its subcellular location is the cytoplasm. The enzyme catalyses tRNA(Glu) + L-glutamate + ATP = L-glutamyl-tRNA(Glu) + AMP + diphosphate. Functionally, catalyzes the attachment of glutamate to tRNA(Glu) in a two-step reaction: glutamate is first activated by ATP to form Glu-AMP and then transferred to the acceptor end of tRNA(Glu). This chain is Glutamate--tRNA ligase, found in Azorhizobium caulinodans (strain ATCC 43989 / DSM 5975 / JCM 20966 / LMG 6465 / NBRC 14845 / NCIMB 13405 / ORS 571).